Here is a 299-residue protein sequence, read N- to C-terminus: uncharacterized protein (299 aa).

A helical membrane pass occupies residues 25 to 45; sequence LLYFFKSLAMILFFIFFSLTS.

It is found in the membrane. This is an uncharacterized protein from Rickettsia prowazekii (strain Madrid E).